We begin with the raw amino-acid sequence, 244 residues long: Phosphoadenosine 5'-phosphosulfate reductase (244 aa).

Catalysis depends on Cys-239, which acts as the Nucleophile; cysteine thiosulfonate intermediate.

Belongs to the PAPS reductase family. CysH subfamily.

The protein localises to the cytoplasm. The catalysed reaction is [thioredoxin]-disulfide + sulfite + adenosine 3',5'-bisphosphate + 2 H(+) = [thioredoxin]-dithiol + 3'-phosphoadenylyl sulfate. It participates in sulfur metabolism; hydrogen sulfide biosynthesis; sulfite from sulfate: step 3/3. In terms of biological role, catalyzes the formation of sulfite from phosphoadenosine 5'-phosphosulfate (PAPS) using thioredoxin as an electron donor. The protein is Phosphoadenosine 5'-phosphosulfate reductase of Sodalis glossinidius (strain morsitans).